A 644-amino-acid chain; its full sequence is Type III restriction-modification enzyme EcoP15I Mod subunit (644 aa).

Residues 123 to 126 (DPPY) form a binding of S-adenosyl methionine region.

It belongs to the N(4)/N(6)-methyltransferase family. In terms of assembly, forms a homodimer capable of methylating the target sequence in the absence of Res. A heterotetramer with stoichiometry Res(2)Mod(2). A heterotrimer with stoichiometry Res(1)Mod(2).

The catalysed reaction is a 2'-deoxyadenosine in DNA + S-adenosyl-L-methionine = an N(6)-methyl-2'-deoxyadenosine in DNA + S-adenosyl-L-homocysteine + H(+). Functionally, a beta subtype methylase that binds the system-specific DNA recognition site 5'-CAGCAG-3' and methylates A-5 (of only 1 strand as the other does not have an A residue). DNA restriction requires both the Res and Mod subunits. The A-5 nucleotide flips into the catalytic pocket of one Mod subunit for modification, while the other Mod subunit makes most of the DNA sequence-specific contacts. In Escherichia coli, this protein is Type III restriction-modification enzyme EcoP15I Mod subunit.